The sequence spans 346 residues: Small ribosomal subunit biogenesis GTPase RsgA 2 (346 aa).

The 156-residue stretch at 93–248 folds into the CP-type G domain; that stretch reads EEQLIAANFD…VIDTPGMREF (156 aa). Residues 138–141 and 190–198 each bind GTP; these read TKAD and GSSGVGKSS. Zn(2+) is bound by residues cysteine 271, cysteine 276, histidine 278, and cysteine 284.

The protein belongs to the TRAFAC class YlqF/YawG GTPase family. RsgA subfamily. As to quaternary structure, monomer. Associates with 30S ribosomal subunit, binds 16S rRNA. It depends on Zn(2+) as a cofactor.

The protein resides in the cytoplasm. One of several proteins that assist in the late maturation steps of the functional core of the 30S ribosomal subunit. Helps release RbfA from mature subunits. May play a role in the assembly of ribosomal proteins into the subunit. Circularly permuted GTPase that catalyzes slow GTP hydrolysis, GTPase activity is stimulated by the 30S ribosomal subunit. In Listeria monocytogenes serotype 4b (strain F2365), this protein is Small ribosomal subunit biogenesis GTPase RsgA 2.